Reading from the N-terminus, the 337-residue chain is HTH-type transcriptional repressor PurR (337 aa).

In terms of domain architecture, HTH lacI-type spans 2–56 (ATIKDVAKLAAVSTTTVSHVINKTRFVAEATQKRVWEAVEELNYAPSAVARSLKC). A DNA-binding region (H-T-H motif) is located at residues 4-23 (IKDVAKLAAVSTTTVSHVIN). The DNA-binding element occupies 48–56 (SAVARSLKC). Phenylalanine 73, lysine 189, threonine 191, phenylalanine 220, and aspartate 276 together coordinate hypoxanthine.

In terms of assembly, homodimer.

It participates in purine metabolism; purine nucleotide biosynthesis [regulation]. In terms of biological role, is the main repressor of the genes involved in the de novo synthesis of purine nucleotides, regulating purB, purC, purEK, purF, purHD, purL, purMN and guaBA expression. PurR is allosterically activated to bind its cognate DNA by binding the purine corepressors, hypoxanthine or guanine, thereby effecting transcription repression. The polypeptide is HTH-type transcriptional repressor PurR (Aliivibrio fischeri (strain MJ11) (Vibrio fischeri)).